Here is a 427-residue protein sequence, read N- to C-terminus: Dihydroorotase (427 aa).

Residues H60 and H62 each coordinate Zn(2+). Substrate-binding positions include 62–64 (HLR) and N94. Zn(2+)-binding residues include D152, H179, and H232. N278 contributes to the substrate binding site. D305 provides a ligand contact to Zn(2+). The active site involves D305. Substrate-binding positions include H309 and 323-324 (FG).

It belongs to the metallo-dependent hydrolases superfamily. DHOase family. Class I DHOase subfamily. Zn(2+) is required as a cofactor.

It catalyses the reaction (S)-dihydroorotate + H2O = N-carbamoyl-L-aspartate + H(+). Its pathway is pyrimidine metabolism; UMP biosynthesis via de novo pathway; (S)-dihydroorotate from bicarbonate: step 3/3. Functionally, catalyzes the reversible cyclization of carbamoyl aspartate to dihydroorotate. The sequence is that of Dihydroorotase from Geobacillus sp. (strain WCH70).